Reading from the N-terminus, the 552-residue chain is MAAFIKDSFWGQIIYRLSGRKLFRHNDELPDYVVPEKYLLDPKEEVLNSSDKSQSSENKEQTEGDQATIQNEPASEHIIVTWDGDDDPENPYNWPFAWKAIAAMQIGFLTVSVYMASAIYTPGVEEIMNQFNINSTLATLPLTMFVIGYGIGPLFWSPLSENSRIGRTPLYIITLFIFFILQIPTALSNHIAGLSVLRVIAGFFAAPALSTGGASYGDFIAMHYYSIALGVWSIFAVAGPSIGPLIGAAVINRSHDADGWRWSFWFMAILSGVCFIVLSFSLPETYGKTLLRRKAERLRKLTGNNRIISEGELEDGHKTTSQVVSSLLWRPLEITMLEPVVFLIDIYIALVYSIMYLIFESVPIVYAGIHHFTLVEMGATYVSTIIGIIIGGAIYLPTVYYKFTKKLLAGQNVTPEVFLPPAIFGAICMPIGVFIFGWTSSPDINWFVPLIGMALFAVGAFIIFQTLFNYMAVSFKVEYLASVFSSNAFFRSVSAGAFPLFGRALYNNLSIDKFPVGWGSSILGFISLGMIAIPVFFYLNGPKLRARSKYAY.

The tract at residues 46–70 is disordered; that stretch reads VLNSSDKSQSSENKEQTEGDQATIQ. Residues 47 to 56 are compositionally biased toward polar residues; it reads LNSSDKSQSS. Transmembrane regions (helical) follow at residues 100–120, 137–157, 168–188, 194–213, 225–246, 262–282, 346–362, 381–399, 419–439, 445–464, 477–494, and 518–539; these read AIAA…SAIY, LATL…LFWS, TPLY…TALS, LSVL…STGG, YSIA…GPLI, WSFW…SFSL, IYIA…FESV, YVST…LPTV, LPPA…FGWT, NWFV…FIIF, VEYL…RSVS, and WGSS…FFYL.

The protein belongs to the major facilitator superfamily. CAR1 family.

The protein localises to the membrane. Functionally, probable transporter. Confers resistance to cycloheximide. In Candida maltosa (Yeast), this protein is Cycloheximide resistance protein (CYHR).